Reading from the N-terminus, the 382-residue chain is Pyrimidine monooxygenase RutA (382 aa).

FMN contacts are provided by residues 68–69 (IK), asparagine 134, glutamate 143, 159–160 (RY), and serine 209.

This sequence belongs to the NtaA/SnaA/DszA monooxygenase family. RutA subfamily.

The enzyme catalyses uracil + FMNH2 + NADH + O2 = (Z)-3-ureidoacrylate + FMN + NAD(+) + H2O + H(+). It catalyses the reaction thymine + FMNH2 + NADH + O2 = (Z)-2-methylureidoacrylate + FMN + NAD(+) + H2O + H(+). In terms of biological role, catalyzes the pyrimidine ring opening between N-3 and C-4 by an unusual flavin hydroperoxide-catalyzed mechanism, adding oxygen atoms in the process to yield ureidoacrylate peracid, that immediately reacts with FMN forming ureidoacrylate and FMN-N(5)-oxide. The FMN-N(5)-oxide reacts spontaneously with NADH to produce FMN. Requires the flavin reductase RutF to regenerate FMN in vivo. The sequence is that of Pyrimidine monooxygenase RutA from Escherichia coli O45:K1 (strain S88 / ExPEC).